Reading from the N-terminus, the 502-residue chain is Nucleoside transporter 2 (502 aa).

Residues 1 to 30 (MTTSSDSAMVNHTPSPWYKFGFKSFAEFNT) are Cytoplasmic-facing. Residues 31-51 (YVTFVFLGMSIMMVASAVTSA) form a helical membrane-spanning segment. The Extracellular portion of the chain corresponds to 52–81 (PDFLTRYYVYATGDPDAVAETPLFWNNANT). Residues 82-102 (FYNAGTYVLQVLTELFSLTPF) traverse the membrane as a helical segment. Over 103–111 (MRRIPLSVR) the chain is Cytoplasmic. A helical transmembrane segment spans residues 112–132 (LFVGLGIPFAELLLIIIVPAA). Residues 133 to 137 (TIKSQ) are Extracellular-facing. A helical transmembrane segment spans residues 138–158 (HGAIAVIMVVACVGGFSKALC). The Cytoplasmic segment spans residues 159-178 (DSCTNALVGPFPTKFMNGAQ). Residues 179-199 (WGLTVIALLMSIIQIILKVSM) form a helical membrane-spanning segment. The Extracellular portion of the chain corresponds to 200-210 (GTSFHDILTMS). The chain crosses the membrane as a helical span at residues 211–231 (RIYFGICIGIQLFAIFELAIL). The Cytoplasmic segment spans residues 232–352 (RFNPFAQKYI…SVFKRVYPML (121 aa)). Residues 252–273 (AQNNESTLEETAPSMNEPAAGD) form a disordered region. Residues 353-373 (VCVFLIYFTSLLTFPGVFFLV) form a helical membrane-spanning segment. Residues 374 to 380 (STTSGWY) are Extracellular-facing. A helical membrane pass occupies residues 381 to 401 (MTVIVTLFNAGDFISRMVLMF). Residues 402–408 (RPLRPSP) lie on the Cytoplasmic side of the membrane. The helical transmembrane segment at 409–429 (KVVVAGTLGRLIIIPFLVLCV) threads the bilayer. Topologically, residues 430 to 436 (RGIIRGE) are extracellular. The chain crosses the membrane as a helical span at residues 437–457 (ALPYVLITLLGLTNGYFGCMA). Topologically, residues 458–477 (CIHCPRTTTLRYAGERSLAA) are cytoplasmic. The helical transmembrane segment at 478–498 (MLSGISIMLGLCFGSNLSLAI) threads the bilayer. The Extracellular segment spans residues 499 to 502 (TLTH).

The protein belongs to the SLC29A/ENT transporter (TC 2.A.57) family.

Its subcellular location is the cell membrane. The catalysed reaction is inosine(in) = inosine(out). The enzyme catalyses guanosine(in) = guanosine(out). Functionally, high affinity transporter for inosine and guanosine. This is Nucleoside transporter 2 from Crithidia fasciculata.